The chain runs to 1832 residues: COPII coat assembly protein sec16 (1832 aa).

7 disordered regions span residues 1–163 (MAQP…NDAQ), 183–209 (GATV…RDNE), 240–269 (LGQG…EDDE), 345–863 (QAEL…APVP), 1420–1482 (PATG…HGMP), 1509–1679 (EDSA…LGEE), and 1692–1832 (VNKK…VMAK). Residues 57-74 (ENGSIESKTAISADTSDQ) show a composition bias toward polar residues. The span at 91–118 (SKPDTEEPDKPSRDESIFMQTDKSRAVE) shows a compositional bias: basic and acidic residues. Over residues 123 to 133 (NVPTENGNVDI) the composition is skewed to polar residues. The segment covering 137–151 (LEEHVAEEPHYEGPE) has biased composition (basic and acidic residues). Acidic residues-rich tracts occupy residues 257–269 (QVDD…EDDE), 348–361 (LSDD…TEDD), and 369–383 (ELDD…DDDT). Residues 422 to 457 (VSYTPHQPSTSDLLSGIPAQNTAAQPTNASMSSYFS) are compositionally biased toward polar residues. Over residues 471-480 (SFAERSKEGY) the composition is skewed to basic and acidic residues. Residues 510 to 524 (VPKPPPRSSSIPAPP) show a composition bias toward pro residues. Polar residues-rich tracts occupy residues 528–546 (STVS…TAPQ) and 590–603 (NQYS…QSNI). The span at 622-636 (NLLAPNVPSAPAVPS) shows a compositional bias: low complexity. A compositionally biased stretch (pro residues) spans 653–665 (KPPPSPRYSPAPP). A compositionally biased stretch (polar residues) spans 679–688 (YASQPASISG). Positions 705–721 (YHEKIHYEDQGQSEERP) are enriched in basic and acidic residues. The span at 738–747 (SEQPVSSENK) shows a compositional bias: polar residues. A compositionally biased stretch (low complexity) spans 814–829 (PRRSQTQSPSQTLSPR). 4 stretches are compositionally biased toward polar residues: residues 845-854 (HGSTSPTRTV), 1428-1439 (QPVSQYAPSASP), 1513-1538 (SGAQ…SSTY), and 1550-1559 (QAVSTTSQPD). Composition is skewed to basic and acidic residues over residues 1594–1603 (EDKPKKKSIM) and 1620–1644 (KAER…DAKK). Pro residues predominate over residues 1725–1736 (GPPPAMATPPPT). The span at 1737-1756 (GASGSRPSSSAGAPTSVSAS) shows a compositional bias: low complexity. Pro residues predominate over residues 1757-1769 (PAPPSLGAPPPAI).

Belongs to the SEC16 family.

It is found in the endoplasmic reticulum membrane. In terms of biological role, involved in the initiation of assembly of the COPII coat required for the formation of transport vesicles from the endoplasmic reticulum (ER) and the selection of cargo molecules. Also involved in autophagy. In Aspergillus fumigatus (strain ATCC MYA-4609 / CBS 101355 / FGSC A1100 / Af293) (Neosartorya fumigata), this protein is COPII coat assembly protein sec16 (sec16).